We begin with the raw amino-acid sequence, 508 residues long: Photosystem II CP47 reaction center protein (508 aa).

A run of 6 helical transmembrane segments spans residues 21 to 36, 101 to 115, 140 to 156, 203 to 218, 237 to 252, and 457 to 472; these read AVHI…WAGS, IVFS…IWHW, GIHL…FGAF, IAAG…FHLS, VLSS…AFVV, and SFAL…HGSR.

It belongs to the PsbB/PsbC family. PsbB subfamily. In terms of assembly, PSII is composed of 1 copy each of membrane proteins PsbA, PsbB, PsbC, PsbD, PsbE, PsbF, PsbH, PsbI, PsbJ, PsbK, PsbL, PsbM, PsbT, PsbX, PsbY, PsbZ, Psb30/Ycf12, at least 3 peripheral proteins of the oxygen-evolving complex and a large number of cofactors. It forms dimeric complexes. Binds multiple chlorophylls. PSII binds additional chlorophylls, carotenoids and specific lipids. is required as a cofactor.

Its subcellular location is the plastid. It is found in the chloroplast thylakoid membrane. In terms of biological role, one of the components of the core complex of photosystem II (PSII). It binds chlorophyll and helps catalyze the primary light-induced photochemical processes of PSII. PSII is a light-driven water:plastoquinone oxidoreductase, using light energy to abstract electrons from H(2)O, generating O(2) and a proton gradient subsequently used for ATP formation. This chain is Photosystem II CP47 reaction center protein, found in Populus trichocarpa (Western balsam poplar).